Consider the following 799-residue polypeptide: High affinity nerve growth factor receptor (799 aa).

An N-terminal signal peptide occupies residues 1-33 (MLRGQRLGQLGWHRPAAGLGSLMTSLMLACASA). Residues 34–420 (ASCREVCCPV…VEKKDETPFG (387 aa)) are Extracellular-facing. Disulfide bonds link Cys-36/Cys-41 and Cys-40/Cys-50. A glycan (N-linked (GlcNAc...) asparagine) is linked at Asn-67. LRR repeat units lie at residues 90–113 (LGEL…AFRF) and 116–137 (RLSH…TVQG). Asn-121, Asn-190, Asn-204, Asn-255, Asn-264, Asn-320, Asn-325, Asn-341, Asn-361, and Asn-404 each carry an N-linked (GlcNAc...) asparagine glycan. An LRRCT domain is found at 148-219 (NPLHCSCALF…GDDVFLQCQV (72 aa)). Cys-154 and Cys-193 are joined by a disulfide. Ig-like C2-type domains are found at residues 196–285 (PTVK…VSVS) and 205–368 (DSVE…LAAN). 2 disulfides stabilise this stretch: Cys-217-Cys-267 and Cys-302-Cys-348. The chain crosses the membrane as a helical span at residues 421–441 (VSVAVGLAVSAALFLSALLLV). Topologically, residues 442 to 799 (LNKCGQRSKF…APPSYLDVLG (358 aa)) are cytoplasmic. Positions 472-493 (MTLGGSSLSPTEGKGSGLQGHI) are interaction with SQSTM1. Tyr-499 is subject to Phosphotyrosine; by autocatalysis. The Protein kinase domain maps to 513 to 784 (IILKWELGEG…LSMKDVHARL (272 aa)). Residues 519–527 (LGEGAFGKV) and Lys-547 each bind ATP. Asp-653 serves as the catalytic Proton acceptor. Residues Tyr-679, Tyr-683, Tyr-684, and Tyr-794 each carry the phosphotyrosine; by autocatalysis modification.

Belongs to the protein kinase superfamily. Tyr protein kinase family. Insulin receptor subfamily. In terms of assembly, exists in a dynamic equilibrium between monomeric (low affinity) and dimeric (high affinity) structures. Homodimerization is induced by binding of a NGF dimer. Found in a complex, at least composed of KIDINS220, MAGI2, NTRK1 and RAPGEF2; the complex is mainly formed at late endosomes in a nerve growth factor (NGF)-dependent manner. Interacts with RAPGEF2; the interaction is strengthened after NGF stimulation. Interacts with SQSTM1; bridges NTRK1 to NGFR. Forms a ternary complex with NGFR and KIDINS220; this complex is affected by the expression levels of KIDINS220 and an increase in KIDINS220 expression leads to a decreased association of NGFR and NTRK1. Interacts (phosphorylated upon activation by NGF) with SHC1; mediates SHC1 phosphorylation and activation. Interacts (phosphorylated upon activation by NGF) with PLCG1; mediates PLCG1 phosphorylation and activation. Interacts (phosphorylated) with SH2B1 and SH2B2. Interacts with GRB2. Interacts with PIK3R1. Interacts with FRS2. Interacts with SORT1; may regulate NTRK1 anterograde axonal transport. Interacts with SH2D1A; regulates NTRK1. Interacts with NRADD. Interacts with RAB7A. Interacts with PTPRS. Interacts with USP36; USP36 does not deubiquitinate NTRK1. Interacts with GGA3. Interacts with TSPAN1; this interaction promotes NTRK1 stability. Ligand-mediated autophosphorylation. Interaction with SQSTM1 is phosphotyrosine-dependent. Autophosphorylation at Tyr-499 mediates interaction and phosphorylation of SHC1. In terms of processing, N-glycosylated. Post-translationally, ubiquitinated. Undergoes polyubiquitination upon activation; regulated by NGFR. Ubiquitination by NEDD4L leads to degradation. Ubiquitination regulates the internalization of the receptor.

The protein localises to the cell membrane. It localises to the early endosome membrane. It is found in the late endosome membrane. The protein resides in the recycling endosome membrane. It catalyses the reaction L-tyrosyl-[protein] + ATP = O-phospho-L-tyrosyl-[protein] + ADP + H(+). The pro-survival signaling effect of NTRK1 in neurons requires its endocytosis into signaling early endosomes and its retrograde axonal transport. This is regulated by different proteins including CFL1, RAC1 and SORT1. NTF3 is unable to induce this signaling probably due to the lability of the NTF3-NTRK1 complex in endosomes. SH2D1A inhibits the autophosphorylation of the receptor, and alters the recruitment and activation of downstream effectors and signaling cascades. Regulated by NGFR. Receptor tyrosine kinase involved in the development and the maturation of the central and peripheral nervous systems through regulation of proliferation, differentiation and survival of sympathetic and nervous neurons. High affinity receptor for NGF which is its primary ligand, it can also bind and be activated by NTF3/neurotrophin-3. However, NTF3 only supports axonal extension through NTRK1 but has no effect on neuron survival. Upon dimeric NGF ligand-binding, undergoes homodimerization, autophosphorylation and activation. Recruits, phosphorylates and/or activates several downstream effectors including SHC1, FRS2, SH2B1, SH2B2 and PLCG1 that regulate distinct overlapping signaling cascades driving cell survival and differentiation. Through SHC1 and FRS2 activates a GRB2-Ras-MAPK cascade that regulates cell differentiation and survival. Through PLCG1 controls NF-Kappa-B activation and the transcription of genes involved in cell survival. Through SHC1 and SH2B1 controls a Ras-PI3 kinase-AKT1 signaling cascade that is also regulating survival. In absence of ligand and activation, may promote cell death, making the survival of neurons dependent on trophic factors. This Mus musculus (Mouse) protein is High affinity nerve growth factor receptor (Ntrk1).